The chain runs to 1321 residues: Indole-3-acetaldehyde oxidase (1321 aa).

In terms of domain architecture, 2Fe-2S ferredoxin-type spans 1–90 (MSLVFAINGQ…HCNITTSEGL (90 aa)). Residues Cys-42, Cys-47, and Cys-50 each coordinate [2Fe-2S] cluster. Residues 215–404 (VDSGMYRWCS…LSIEIPFWHS (190 aa)) form the FAD-binding PCMH-type domain.

It belongs to the xanthine dehydrogenase family. In terms of assembly, aldehyde oxidases (AO) are homodimers and heterodimers of AO subunits. AO-beta is a AAO1-AAO2 heterodimer; AO-gamma is a AAO2 homodimer. AAO2 also forms a dimer with AAO3. The cofactor is [2Fe-2S] cluster. Requires FAD as cofactor. Mo-molybdopterin serves as cofactor. Weakly expressed in roots, leaves and seedlings. In seedlings, mostly expressed in lower part of hypocotyls. Detectable in seeds and mature siliques at low levels.

It is found in the cytoplasm. The catalysed reaction is indole-3-acetaldehyde + O2 + H2O = (indol-3-yl)acetate + H2O2 + H(+). Its activity is regulated as follows. Strongly inhibited by iodoacetate, potassium cyanide (KCN), 2-mercaptoethanol, dithiothreitol (DTT), p-chloromercuribenzoate, menadione and estradiol. Weakly inhibited by 4'-(9-acridinylamino)methanesulfon-m-anisidine (mAMSA) and tritonX-100. Not affected by allopurinol. Functionally, in higher plant aldehyde oxidases (AO) appear to be homo- and heterodimeric assemblies of AO subunits with probably different physiological functions. In vitro, AO-gamma uses heptaldehyde, benzaldehyde, naphthaldehyde and cinnamaldehyde as substrates; AO-beta uses indole-3-acetaldehyde (IAAld), indole-3-aldehyde (IAld) and naphtaldehyde; the AAO2-AAO3 dimer uses abscisic aldehyde. This chain is Indole-3-acetaldehyde oxidase (AAO2), found in Arabidopsis thaliana (Mouse-ear cress).